Here is a 207-residue protein sequence, read N- to C-terminus: Large ribosomal subunit protein uL4 (207 aa).

A disordered region spans residues 49–78 (HAVKNRSAVSGGGRKPWRQKGTGRARQGSI).

Belongs to the universal ribosomal protein uL4 family. In terms of assembly, part of the 50S ribosomal subunit.

Functionally, one of the primary rRNA binding proteins, this protein initially binds near the 5'-end of the 23S rRNA. It is important during the early stages of 50S assembly. It makes multiple contacts with different domains of the 23S rRNA in the assembled 50S subunit and ribosome. Forms part of the polypeptide exit tunnel. This chain is Large ribosomal subunit protein uL4, found in Streptococcus thermophilus (strain CNRZ 1066).